Here is a 1794-residue protein sequence, read N- to C-terminus: Non-reducing polyketide synthase nscA (1794 aa).

An N-terminal acylcarrier protein transacylase domain (SAT) region spans residues 19 to 256 (DLKDLFRRLH…PLPVYDGLCH (238 aa)). The Ketosynthase family 3 (KS3) domain maps to 389–822 (ASKLAIVGMA…GGNTTVLLED (434 aa)). Positions 427-448 (PDRFDLNTHYDPTGKTENATQT) are disordered. Residues 428-440 (DRFDLNTHYDPTG) are compositionally biased toward basic and acidic residues. Residues C562, H697, and H740 each act as for beta-ketoacyl synthase activity in the active site. A malonyl-CoA:ACP transacylase (MAT) domain region spans residues 928 to 1249 (FTGQGAYYSG…LVTLHLAGLT (322 aa)). Positions 1314-1633 (TSLVHQITAE…RLLMDRFFSP (320 aa)) are product template (PT) domain. The segment at 1318–1454 (HQITAETVEA…GVVRFEDPAA (137 aa)) is N-terminal hotdog fold. One can recognise a PKS/mFAS DH domain in the interval 1318-1628 (HQITAETVEA…FRRVPRLLMD (311 aa)). H1350 functions as the Proton acceptor; for dehydratase activity in the catalytic mechanism. Residues 1482–1628 (ASKLSKPLAY…FRRVPRLLMD (147 aa)) are C-terminal hotdog fold. Residue D1539 is the Proton donor; for dehydratase activity of the active site. Disordered stretches follow at residues 1637–1665 (SHAE…EAPA) and 1682–1718 (ASKS…GDPV). 2 stretches are compositionally biased toward polar residues: residues 1644–1655 (QETAPSATSVKK) and 1685–1701 (SEVS…QESP). Positions 1717–1794 (PVDAGVVGQC…EMTAWLEEYC (78 aa)) constitute a Carrier domain. S1754 carries the O-(pantetheine 4'-phosphoryl)serine modification.

It depends on pantetheine 4'-phosphate as a cofactor.

It participates in secondary metabolite biosynthesis. Non-reducing polyketide synthase; part of the gene cluster that mediates the biosynthesis of neosartoricin, a prenylated anthracenone that exhibits T-cell antiproliferative activity, suggestive of a physiological role as an immunosuppressive agent. The non-reducing polyketide synthase nscA probably synthesizes and cyclizes the decaketide backbone. The hydrolase nscB then mediates the product release through hydrolysis followed by spontaneous decarboxylation. The prenyltransferase nscD catalyzes the addition of the dimethylallyl group to the aromatic C5. The FAD-dependent monooxygenase nscC is then responsible for the stereospecific hydroxylation at C2. There is no gene encoding O-acetyltransferase in the nsc gene cluster; thus, the last step of 2-O-acetylation leading to neosartoricin may be catalyzed by an unidentified O-acetyltransferase. This Neosartorya fischeri (strain ATCC 1020 / DSM 3700 / CBS 544.65 / FGSC A1164 / JCM 1740 / NRRL 181 / WB 181) (Aspergillus fischerianus) protein is Non-reducing polyketide synthase nscA.